Reading from the N-terminus, the 521-residue chain is MDFSSNVAAQLNAGTILPEGIVIVTLLLVLIVDLIGGRKVALALPYLAIAGLLVSVGLLVTSWSMADPIGFIGAFNGDNLSIIFRAIIALSTVVTILMSVRYVQQTGTSLAEFIAILLTATLGGMFLSAANELVMVFISLEMLSISSYLMTGYMKRDPRSNEAALKYLLIGASSSAIFLYGLSLLYGLSGGETQLVLIAEKLVNADTVGQSLGLAIALVFVIAGIAFKISAVPFHQWTPDVYEGSPTPVVAFLSVGSKAAGFAVAIRLLVTAFGGITDEWHVIFTALAVLSMVLGNVVALAQTSMKRMLAYSSIGQAGFVMIGLVAGSEDGYASMVFYMLIYLFMNLGAFSCIILFTLRTGSDQISDYAGLYHKDPLLTLGLSICLLSLGGIPPLAGFFGKIYIFWAGWQSGLYGLVLLGLVTSVVSIYYYIRVVKMMVVKEPQEMSEVIKNYPAIKWNLPGMRPLQVGIVATLVATSLAGILANPLFNLATDSVVSTKMLQTALQQTGETPAIAISHDLP.

14 consecutive transmembrane segments (helical) span residues 16–36 (ILPEGIVIVTLLLVLIVDLIG), 40–60 (VALALPYLAIAGLLVSVGLLV), 80–100 (LSIIFRAIIALSTVVTILMSV), 110–130 (LAEFIAILLTATLGGMFLSAA), 133–153 (LVMVFISLEMLSISSYLMTGY), 168–188 (LLIGASSSAIFLYGLSLLYGL), 212–232 (LGLAIALVFVIAGIAFKISAV), 246–266 (PTPVVAFLSVGSKAAGFAVAI), 280–300 (WHVIFTALAVLSMVLGNVVAL), 308–328 (MLAYSSIGQAGFVMIGLVAGS), 336–356 (VFYMLIYLFMNLGAFSCIILF), 380–400 (LGLSICLLSLGGIPPLAGFFG), 402–422 (IYIFWAGWQSGLYGLVLLGLV), and 468–488 (VGIVATLVATSLAGILANPLF).

It belongs to the complex I subunit 2 family. As to quaternary structure, NDH-1 can be composed of about 15 different subunits; different subcomplexes with different compositions have been identified which probably have different functions.

Its subcellular location is the cellular thylakoid membrane. The catalysed reaction is a plastoquinone + NADH + (n+1) H(+)(in) = a plastoquinol + NAD(+) + n H(+)(out). It carries out the reaction a plastoquinone + NADPH + (n+1) H(+)(in) = a plastoquinol + NADP(+) + n H(+)(out). Functionally, NDH-1 shuttles electrons from an unknown electron donor, via FMN and iron-sulfur (Fe-S) centers, to quinones in the respiratory and/or the photosynthetic chain. The immediate electron acceptor for the enzyme in this species is believed to be plastoquinone. Couples the redox reaction to proton translocation, and thus conserves the redox energy in a proton gradient. Cyanobacterial NDH-1 also plays a role in inorganic carbon-concentration. The sequence is that of NAD(P)H-quinone oxidoreductase subunit 2 from Synechocystis sp. (strain ATCC 27184 / PCC 6803 / Kazusa).